We begin with the raw amino-acid sequence, 430 residues long: Asparagine--tRNA ligase (430 aa).

The protein belongs to the class-II aminoacyl-tRNA synthetase family. Homodimer.

Its subcellular location is the cytoplasm. The enzyme catalyses tRNA(Asn) + L-asparagine + ATP = L-asparaginyl-tRNA(Asn) + AMP + diphosphate + H(+). This is Asparagine--tRNA ligase from Pelotomaculum thermopropionicum (strain DSM 13744 / JCM 10971 / SI).